Reading from the N-terminus, the 275-residue chain is NH(3)-dependent NAD(+) synthetase (275 aa).

47-54 (GISGGQDS) provides a ligand contact to ATP. Asp-53 contacts Mg(2+). Arg-141 is a deamido-NAD(+) binding site. ATP is bound at residue Thr-161. Glu-166 contributes to the Mg(2+) binding site. Deamido-NAD(+) contacts are provided by Lys-174 and Asp-181. 2 residues coordinate ATP: Lys-190 and Thr-212. 261 to 262 (HK) provides a ligand contact to deamido-NAD(+).

The protein belongs to the NAD synthetase family. As to quaternary structure, homodimer.

The enzyme catalyses deamido-NAD(+) + NH4(+) + ATP = AMP + diphosphate + NAD(+) + H(+). It functions in the pathway cofactor biosynthesis; NAD(+) biosynthesis; NAD(+) from deamido-NAD(+) (ammonia route): step 1/1. In terms of biological role, catalyzes the ATP-dependent amidation of deamido-NAD to form NAD. Uses ammonia as a nitrogen source. The polypeptide is NH(3)-dependent NAD(+) synthetase (Enterococcus faecalis (strain ATCC 700802 / V583)).